A 305-amino-acid polypeptide reads, in one-letter code: Glutaminase 2 (305 aa).

Residues Ser-61, Asn-113, Glu-158, Asn-165, Tyr-189, Tyr-241, and Val-259 each contribute to the substrate site.

This sequence belongs to the glutaminase family. Homotetramer.

The catalysed reaction is L-glutamine + H2O = L-glutamate + NH4(+). In Clostridium perfringens (strain 13 / Type A), this protein is Glutaminase 2.